The chain runs to 249 residues: 3-deoxy-D-manno-octulosonic acid kinase (249 aa).

Residue Asp175 is part of the active site.

The protein belongs to the protein kinase superfamily. KdkA/RfaP family.

Its subcellular location is the cell inner membrane. It carries out the reaction an alpha-Kdo-(2-&gt;6)-lipid IVA + ATP = a 4-O-phospho-alpha-Kdo-(2-&gt;6)-lipid IVA + ADP + H(+). The protein operates within bacterial outer membrane biogenesis; LPS core biosynthesis. In terms of biological role, catalyzes the ATP-dependent phosphorylation of the 3-deoxy-D-manno-octulosonic acid (Kdo) residue in Kdo-lipid IV(A) at the 4-OH position. The protein is 3-deoxy-D-manno-octulosonic acid kinase of Xylella fastidiosa (strain M12).